Reading from the N-terminus, the 874-residue chain is ATP-dependent RNA helicase DDX54 (874 aa).

The tract at residues 1–76 (MAAGRRVGPG…FPTSECVSDV (76 aa)) is disordered. Over residues 20-30 (WKKKRLRKRRT) the composition is skewed to basic residues. T30 carries the post-translational modification Phosphothreonine. S33, S38, S40, and S74 each carry phosphoserine. Positions 39 to 50 (DSDDGEFEIQAE) are enriched in acidic residues. The short motif at 95–123 (GGFQSMGLSYPVFKGIMKKGYKVPTPIQR) is the Q motif element. Positions 126–298 (IPVILDGKDV…RAGLTEPVLI (173 aa)) constitute a Helicase ATP-binding domain. Position 139–146 (139–146 (ARTGSGKT)) interacts with ATP. The DEAD box motif lies at 246–249 (DEAD). The region spanning 328-472 (YLLQNVVRPQ…ARPCEEPSVA (145 aa)) is the Helicase C-terminal domain. The segment covering 581–590 (ASSKDPSSQM) has biased composition (polar residues). Positions 581 to 687 (ASSKDPSSQM…PKDFDSERGL (107 aa)) are disordered. A compositionally biased stretch (low complexity) spans 636–645 (TVEGVFTEVV). Positions 664 to 685 (ETRQRDQEFYVPYRPKDFDSER) are enriched in basic and acidic residues. S688 and S690 each carry phosphoserine. Positions 712–874 (AQNMSRGQQQ…SRKGKMRKRM (163 aa)) are disordered. Over residues 713-722 (QNMSRGQQQL) the composition is skewed to polar residues. 2 stretches are compositionally biased toward basic and acidic residues: residues 737-747 (QEDKKKIKTES) and 755-771 (YKRD…KIDD). Phosphoserine is present on residues S774 and S780. Residues 812–823 (MRSELKTKEQIL) show a composition bias toward basic and acidic residues. Over residues 864-874 (PSRKGKMRKRM) the composition is skewed to basic residues.

It belongs to the DEAD box helicase family. DDX54/DBP10 subfamily. In terms of assembly, interacts in a hormone-dependent manner with nuclear receptors.

The protein resides in the nucleus. Its subcellular location is the nucleolus. It carries out the reaction ATP + H2O = ADP + phosphate + H(+). Functionally, has RNA-dependent ATPase activity. Represses the transcriptional activity of nuclear receptors. This is ATP-dependent RNA helicase DDX54 (Ddx54) from Mus musculus (Mouse).